A 248-amino-acid polypeptide reads, in one-letter code: Granulin (248 aa).

It belongs to the polyhedrin family.

In terms of biological role, component of the virus occlusion bodies, which are large proteinaceous structures, that protect the virus from the outside environment for extended periods until they are ingested by insect larvae. The polypeptide is Granulin (Choristoneura fumiferana (Spruce budworm moth)).